A 576-amino-acid polypeptide reads, in one-letter code: MDAFATSPTSALIKAVNCIAHVTPMAGEDSSENRRASNYKPSTWDYEFLQSLATSHNTVQEKHMKMAEKLKEEVKSMIKGQMEPVAKLELINILQRLGLKYRFESEIKEELFSLYKDGTDAWWVDNLHATALRFRLLRENGIFVPQDVFETLKDKSGKFKSQLCKDVRGLLSLYEASYLGWEGEDLLDEAKKFSTTNLNNVKESISSNTLGRLVKHALNLPLHWSAARYEARWFIDEYEKEENVNPNLLKYAKLDFNIVQSIHQQELGNLARWWVETGLDKLSFVRNTLMQNFMWGCAMVFEPQYGKVRDAAVKQASLIAMVDDVYDVYGSLEELEIFTDIVDRWDITGIDKLPRNISMILLTMFNTANQIGYDLLRDRGFNGIPHIAQAWATLCKKYLKEAKWYHSGYKPTLEEYLENGLVSISFVLSLVTAYLQTEILENLTYESAAYVNSVPPLVRYSGLLNRLYNDLGTSSAEIARGDTLKSIQCYMTQTGATEEAAREHIKGLVHEAWKGMNKCLFEQTPFAEPFVGFNVNTVRGSQFFYQHGDGYAVTESWTKDLSLSVLIHPIPLNEED.

5 residues coordinate (2E)-geranyl diphosphate: arginine 286, aspartate 323, aspartate 327, arginine 466, and asparagine 469. Mg(2+) is bound by residues aspartate 323 and aspartate 327. Positions 323 to 327 (DDVYD) match the DDXXD motif motif. Positions 469, 473, and 477 each coordinate Mg(2+).

It belongs to the terpene synthase family. Tpsb subfamily. Requires Mg(2+) as cofactor. The cofactor is Mn(2+).

The catalysed reaction is (2E)-geranyl diphosphate + H2O = (R)-alpha-terpineol + diphosphate. Monoterpene synthase producing mainly (+)-alpha-terpineol (44%) and (-)-limonene (33.6%) and lower amounts of (E)-geraniol (5.9%), linalool (5.0%), myrcene (3.4%), (-)-alpha-pinene (3.3%), (+)-sabinene (3.0%) and alpha-terpinolene (1.6%). The sequence is that of (+)-alpha-terpineol synthase from Santalum album (White sandalwood).